The chain runs to 336 residues: DNA-directed RNA polymerase subunit alpha (336 aa).

The segment at Met-1 to Asn-226 is alpha N-terminal domain (alpha-NTD). Residues Ala-241–Leu-336 form an alpha C-terminal domain (alpha-CTD) region.

This sequence belongs to the RNA polymerase alpha chain family. Homodimer. The RNAP catalytic core consists of 2 alpha, 1 beta, 1 beta' and 1 omega subunit. When a sigma factor is associated with the core the holoenzyme is formed, which can initiate transcription.

It carries out the reaction RNA(n) + a ribonucleoside 5'-triphosphate = RNA(n+1) + diphosphate. DNA-dependent RNA polymerase catalyzes the transcription of DNA into RNA using the four ribonucleoside triphosphates as substrates. This Arthrobacter sp. (strain FB24) protein is DNA-directed RNA polymerase subunit alpha.